The following is a 393-amino-acid chain: NAD(P)H-quinone oxidoreductase subunit H, chloroplastic (393 aa).

Belongs to the complex I 49 kDa subunit family. As to quaternary structure, NDH is composed of at least 16 different subunits, 5 of which are encoded in the nucleus.

Its subcellular location is the plastid. The protein localises to the chloroplast thylakoid membrane. It carries out the reaction a plastoquinone + NADH + (n+1) H(+)(in) = a plastoquinol + NAD(+) + n H(+)(out). It catalyses the reaction a plastoquinone + NADPH + (n+1) H(+)(in) = a plastoquinol + NADP(+) + n H(+)(out). Functionally, NDH shuttles electrons from NAD(P)H:plastoquinone, via FMN and iron-sulfur (Fe-S) centers, to quinones in the photosynthetic chain and possibly in a chloroplast respiratory chain. The immediate electron acceptor for the enzyme in this species is believed to be plastoquinone. Couples the redox reaction to proton translocation, and thus conserves the redox energy in a proton gradient. The chain is NAD(P)H-quinone oxidoreductase subunit H, chloroplastic from Drimys granadensis.